The chain runs to 210 residues: N-(5'-phosphoribosyl)anthranilate isomerase (210 aa).

This sequence belongs to the TrpF family.

The enzyme catalyses N-(5-phospho-beta-D-ribosyl)anthranilate = 1-(2-carboxyphenylamino)-1-deoxy-D-ribulose 5-phosphate. Its pathway is amino-acid biosynthesis; L-tryptophan biosynthesis; L-tryptophan from chorismate: step 3/5. This chain is N-(5'-phosphoribosyl)anthranilate isomerase, found in Staphylococcus aureus (strain bovine RF122 / ET3-1).